The sequence spans 750 residues: Neprilysin (750 aa).

The segment covering 1–14 (MGKSESQMDITDIN) has biased composition (polar residues). The interval 1–20 (MGKSESQMDITDINTPKPKK) is disordered. Gly2 is lipidated: N-myristoyl glycine. Residues 2–28 (GKSESQMDITDINTPKPKKKQRWTPLE) are Cytoplasmic-facing. Residues Ser4 and Ser6 each carry the phosphoserine modification. The Stop-transfer sequence motif lies at 16–23 (PKPKKKQR). A helical; Signal-anchor for type II membrane protein membrane pass occupies residues 29-51 (ISLSVLVLLLTIIAVTMIALYAT). The Extracellular portion of the chain corresponds to 52 to 750 (YDDGICKSSD…MNPEKKCRVW (699 aa)). Residues 56–750 (ICKSSDCIKS…MNPEKKCRVW (695 aa)) enclose the Peptidase M13 domain. Cystine bridges form between Cys57-Cys62, Cys80-Cys735, Cys88-Cys695, Cys143-Cys411, Cys234-Cys242, and Cys621-Cys747. Arg103 is a binding site for a peptide. Asn145 is a glycosylation site (N-linked (GlcNAc...) asparagine). N-linked (GlcNAc...) asparagine glycans are attached at residues Asn285, Asn311, Asn325, and Asn335. His584 lines the Zn(2+) pocket. The active site involves Glu585. His588 is a binding site for Zn(2+). Asn628 is a glycosylation site (N-linked (GlcNAc...) asparagine). Glu647 contacts Zn(2+). Asp651 acts as the Proton donor in catalysis.

The protein belongs to the peptidase M13 family. Requires Zn(2+) as cofactor. In terms of processing, myristoylation is a determinant of membrane targeting. Post-translationally, glycosylation at Asn-628 is necessary both for surface expression and neutral endopeptidase activity.

The protein localises to the cell membrane. The enzyme catalyses Preferential cleavage of polypeptides between hydrophobic residues, particularly with Phe or Tyr at P1'.. It catalyses the reaction substance P + H2O = substance P(1-9) + L-Leu-L-Met-NH2. It carries out the reaction substance P + H2O = substance P(1-7) + L-Phe-Gly-L-Leu-L-Met-NH2. The catalysed reaction is neurotensin + H2O = neurotensin(1-11) + L-isoleucyl-L-leucine. The enzyme catalyses neurotensin + H2O = neurotensin(1-10) + L-tyrosyl-L-isoleucyl-L-leucine. Thermolysin-like specificity, but is almost confined on acting on polypeptides of up to 30 amino acids. Biologically important in the destruction of opioid peptides such as Met- and Leu-enkephalins by cleavage of a Gly-Phe bond. Catalyzes cleavage of bradykinin, substance P and neurotensin peptides. Able to cleave angiotensin-1, angiotensin-2 and angiotensin 1-9. Involved in the degradation of atrial natriuretic factor (ANF) and brain natriuretic factor (BNP(1-32)). Displays UV-inducible elastase activity toward skin preelastic and elastic fibers. In Pongo abelii (Sumatran orangutan), this protein is Neprilysin (MME).